We begin with the raw amino-acid sequence, 211 residues long: Formate dehydrogenase, cytochrome b556(fdo) subunit (211 aa).

The Cytoplasmic segment spans residues 1 to 17 (MKRRDTIVRYTAPERIN). Residue His18 participates in heme b binding. The helical transmembrane segment at 18–32 (HWITAFCFILAAVSG) threads the bilayer. Topologically, residues 33 to 53 (LGFLFPSFNWLMQIMGTPQLA) are periplasmic. A helical membrane pass occupies residues 54-72 (RILHPFVGVVMFASFIIMF). His57 is a binding site for heme b. The Cytoplasmic segment spans residues 73–112 (FRYWHHNLINRDDIFWAKNIRKIVVNEEVGDTGRYNFGQK). Residues 113–130 (CVFWAAIIFLVLLLVSGV) form a helical membrane-spanning segment. Topologically, residues 131-151 (IIWRPYFAPAFSIPVIRFALM) are periplasmic. The chain crosses the membrane as a helical span at residues 152–170 (LHSFAAVALIVVIMVHIYA). Heme b is bound by residues His153 and His167. Residues 171–211 (ALWVKGTITAMVEGWVTSAWAKKHHPRWYREVRKTTEKKAE) are Cytoplasmic-facing.

This sequence belongs to the formate dehydrogenase gamma subunit family. In terms of assembly, formate dehydrogenase is a membrane-bound complex, formed by subunits alpha, beta and gamma. Heme is required as a cofactor.

Its subcellular location is the cell inner membrane. In terms of biological role, allows to use formate as major electron donor during aerobic respiration. Subunit gamma is probably the cytochrome b556(FDO) component of the formate dehydrogenase. The polypeptide is Formate dehydrogenase, cytochrome b556(fdo) subunit (fdoI) (Escherichia coli O157:H7).